We begin with the raw amino-acid sequence, 205 residues long: Protein N-terminal glutamine amidohydrolase (205 aa).

Catalysis depends on residues Cys-20, His-74, and Asp-90.

This sequence belongs to the NTAQ1 family. As to quaternary structure, monomer.

The catalysed reaction is N-terminal L-glutaminyl-[protein] + H2O = N-terminal L-glutamyl-[protein] + NH4(+). Its function is as follows. Mediates the side-chain deamidation of N-terminal glutamine residues to glutamate, an important step in N-end rule pathway of protein degradation. Conversion of the resulting N-terminal glutamine to glutamate renders the protein susceptible to arginylation, polyubiquitination and degradation as specified by the N-end rule. Does not act on substrates with internal or C-terminal glutamine and does not act on non-glutamine residues in any position. The sequence is that of Protein N-terminal glutamine amidohydrolase (tun) from Drosophila willistoni (Fruit fly).